Consider the following 652-residue polypeptide: Cleavage and polyadenylation specificity factor subunit 6 (652 aa).

The segment at 20-85 is disordered; the sequence is QAQDEFGGDG…GVYHQSSGSL (66 aa). Positions 93 to 173 constitute an RRM domain; it reads YQLYVGNLTW…QAPVVTYPSK (81 aa). Disordered stretches follow at residues 184-440 and 518-652; these read KTRP…QQMG and SYNR…RSRH. The segment covering 187–203 has biased composition (pro residues); it reads PVPPPQQNGPPRGPAPP. Gly residues predominate over residues 205 to 223; it reads MGGGPMPTGHPGGPQGGGP. 3 stretches are compositionally biased toward pro residues: residues 256–266, 295–307, and 338–352; these read SGPPRMQPPMH, GPRPGPPNGPPQR, and PQGPPRGLPPAPGPG. Positions 391–406 are enriched in low complexity; sequence PGMNMPPQQGMNMTPQ. Over residues 420–435 the composition is skewed to pro residues; it reads GPWPPPQGKPPGPFPD. A compositionally biased stretch (basic and acidic residues) spans 518–528; that stretch reads SYNRRERSRSR. Positions 529–538 are enriched in basic residues; it reads ERSHRSRQRR. Basic and acidic residues predominate over residues 539–590; the sequence is ERSTSRYRERSRERERDRDRERERDGGSYRERSRSRERERQAPDHYRDDSRS. Ser-596 is subject to Phosphoserine. Residues 598–610 show a composition bias toward low complexity; it reads EPVVAEAAEAPSS. The span at 612–652 shows a compositional bias: basic and acidic residues; the sequence is RYYEDRERYRSSDRERRDRDRDRDRERERDRDRREEHRSRH.

The protein belongs to the RRM CPSF6/7 family.

Its subcellular location is the nucleus. May play a role in pre-mRNA 3'-processing. This chain is Cleavage and polyadenylation specificity factor subunit 6, found in Drosophila melanogaster (Fruit fly).